The chain runs to 287 residues: Methylamine utilization ferredoxin-type protein MauN (287 aa).

4Fe-4S ferredoxin-type domains follow at residues 218–248 (RVAA…PALK) and 251–280 (GSTL…MTMR). [4Fe-4S] cluster-binding residues include Cys227, Cys230, Cys233, Cys237, Cys260, Cys263, Cys266, and Cys270.

The protein operates within one-carbon metabolism; methylamine degradation. Involved in electron transfer. This Methylorubrum extorquens (strain ATCC 14718 / DSM 1338 / JCM 2805 / NCIMB 9133 / AM1) (Methylobacterium extorquens) protein is Methylamine utilization ferredoxin-type protein MauN (mauN).